A 509-amino-acid polypeptide reads, in one-letter code: Tyrosine-protein kinase Lck (509 aa).

A lipid anchor (N-myristoyl glycine) is attached at G2. The tract at residues 2–72 is interactions with CD4 and CD8; sequence GCGCSSHPED…DNLVIALHSY (71 aa). S-palmitoyl cysteine attachment occurs at residues C3 and C5. Residues 61 to 121 enclose the SH3 domain; it reads LQDNLVIALH…PFNFVAKANS (61 aa). Residue K99 forms a Glycyl lysine isopeptide (Lys-Gly) (interchain with G-Cter in ubiquitin) linkage. S102 carries the post-translational modification Phosphoserine. The 98-residue stretch at 127-224 folds into the SH2 domain; it reads WFFKNLSRKD…GLCTRLSRPC (98 aa). Positions 154 to 242 are interaction with PTPRH; the sequence is RESESTAGSF…WWEDEWEVPR (89 aa). T159 carries the phosphothreonine modification. At S162 the chain carries Phosphoserine. Position 192 is a phosphotyrosine (Y192). S194 is modified (phosphoserine). A Protein kinase domain is found at 245–498; the sequence is LKLVERLGAG…YLRSVLEDFF (254 aa). Residues 251–259 and K273 each bind ATP; that span reads LGAGQFGEV. K276 is covalently cross-linked (Glycyl lysine isopeptide (Lys-Gly) (interchain with G-Cter in ubiquitin)). The active-site Proton acceptor is D364. Y394 is modified (phosphotyrosine; by autocatalysis). Phosphotyrosine; by CSK is present on Y505.

Belongs to the protein kinase superfamily. Tyr protein kinase family. SRC subfamily. In terms of assembly, binds to the cytoplasmic domain of cell surface receptors, such as AXL, CD2, CD4, CD5, CD8, CD44, CD45 and CD122. Also binds to effector molecules, such as PI4K, VAV1, RASA1, FYB1 and to other protein kinases including CDK1, RAF1, ZAP70 and SYK. Binds to phosphatidylinositol 3'-kinase (PI3K) from T-lymphocytes through its SH3 domain and to the tyrosine phosphorylated form of KHDRBS1/p70 through its SH2 domain. This interaction inhibits its tyrosine-kinase activity. Interacts with SQSTM1. Interacts with phosphorylated LIME1. Interacts with CBLB and PTPRH. Interacts with RUNX3. Forms a signaling complex with EPHA1, PTK2B and PI3-KINASE; upon activation by EFNA1 which may regulate T-lymphocyte migration. Associates with ZAP70 and RHOH; these interactions allow LCK-mediated RHOH and CD3 subunit phosphorylation in the presence of functional ZAP70. Interacts with UNC119; this interaction plays a crucial role in activation of LCK. Interacts with CEACAM1 (via cytoplasmic domain); mediates CEACAM1 phosphorylation resulting in PTPN6 recruitment that dephosphorylates TCR stimulation-induced CD247 and ZAP70. Interacts with CD160. Interacts with CD48. (Microbial infection) Interacts with herpes simplex virus 1 UL46; this interaction activates LCK. As to quaternary structure, (Microbial infection) Interacts with HIV-1 Nef through its SH3 domain. Autophosphorylated on Tyr-394, increasing enzymatic activity, this site is dephosphorylated by PTN22. Phosphorylated on Tyr-505 by CSK, decreasing activity. Dephosphorylated by PTPRC/CD45. Dephosphorylation at Tyr-394 by PTPN2 negatively regulates T-cell receptor signaling. Dephosphorylation at Tyr-394 by DUSP22 negatively regulates T-cell receptor signaling. In terms of processing, myristoylation is required prior to palmitoylation. Post-translationally, palmitoylation regulates association with the plasma membrane and could be mediated by ZDHHC2. 'Lys-63'-linked ubiquitinated at Lys-99 and Lys-276 by UBR2; this modification is required for autophosphorylation at Tyr-394. Expressed specifically in lymphoid cells.

It is found in the cell membrane. The protein resides in the cytoplasm. Its subcellular location is the cytosol. The catalysed reaction is L-tyrosyl-[protein] + ATP = O-phospho-L-tyrosyl-[protein] + ADP + H(+). The relative activities of the inhibitory tyrosine-protein kinase CSK and the activating tyrosine-protein phosphatase PTPRC/CD45 determine the level of LCK activity. These interactions allow rapid and efficient activation of LCK in response to TCR stimulation. Non-receptor tyrosine-protein kinase that plays an essential role in the selection and maturation of developing T-cells in the thymus and in the function of mature T-cells. Plays a key role in T-cell antigen receptor (TCR)-linked signal transduction pathways. Constitutively associated with the cytoplasmic portions of the CD4 and CD8 surface receptors. Association of the TCR with a peptide antigen-bound MHC complex facilitates the interaction of CD4 and CD8 with MHC class II and class I molecules, respectively, thereby recruiting the associated LCK protein to the vicinity of the TCR/CD3 complex. LCK then phosphorylates tyrosine residues within the immunoreceptor tyrosine-based activation motifs (ITAM) of the cytoplasmic tails of the TCR-gamma chains and CD3 subunits, initiating the TCR/CD3 signaling pathway. Once stimulated, the TCR recruits the tyrosine kinase ZAP70, that becomes phosphorylated and activated by LCK. Following this, a large number of signaling molecules are recruited, ultimately leading to lymphokine production. LCK also contributes to signaling by other receptor molecules. Associates directly with the cytoplasmic tail of CD2, which leads to hyperphosphorylation and activation of LCK. Also plays a role in the IL2 receptor-linked signaling pathway that controls the T-cell proliferative response. Binding of IL2 to its receptor results in increased activity of LCK. Is expressed at all stages of thymocyte development and is required for the regulation of maturation events that are governed by both pre-TCR and mature alpha beta TCR. Phosphorylates other substrates including RUNX3, PTK2B/PYK2, the microtubule-associated protein MAPT, RHOH or TYROBP. Interacts with FYB2. This is Tyrosine-protein kinase Lck (LCK) from Homo sapiens (Human).